The following is a 173-amino-acid chain: Photosystem I assembly protein Ycf3 (173 aa).

TPR repeat units follow at residues 35 to 68, 72 to 105, and 120 to 153; these read AYIY…EENK, GETL…NPKQ, and GRYA…YPGG.

The protein belongs to the Ycf3 family.

It localises to the cellular thylakoid membrane. Functionally, essential for the assembly of the photosystem I (PSI) complex. May act as a chaperone-like factor to guide the assembly of the PSI subunits. The sequence is that of Photosystem I assembly protein Ycf3 from Prochlorococcus marinus (strain MIT 9215).